The following is a 314-amino-acid chain: MVTYLLANFGGPRTSQEIVSFLQALLTDRDVTGGMIPSMLHRPLFSYIAKRRAPHVARQYAYLGGGSPIFQDTERLAQNLSQELQASVIPFHRYLPETHRETLQALQESQGSIVGIPLFPHYTFAVTGSIIRFFLQHLPEKPISWITQFGVHPEFVSCMQQHIRDCLAAQQIAVEDCYFLFSVHGLPQRHIRLGDPYAQQCQASFEALRGELEGKIAFQSKFGIGKWLDPSTQEVCQSLRTKKRHIVIVPFGFVSDHIETLHEIDHLYVPILLQKGYRVVRIPAINASSRWVSSLAAIVRSSPQETSLEPLLMP.

Residues histidine 184 and glutamate 259 each contribute to the Fe cation site.

The protein belongs to the ferrochelatase family.

The protein resides in the cytoplasm. It carries out the reaction heme b + 2 H(+) = protoporphyrin IX + Fe(2+). The protein operates within porphyrin-containing compound metabolism; protoheme biosynthesis; protoheme from protoporphyrin-IX: step 1/1. In terms of biological role, catalyzes the ferrous insertion into protoporphyrin IX. The protein is Ferrochelatase of Chlamydia trachomatis serovar A (strain ATCC VR-571B / DSM 19440 / HAR-13).